Here is a 664-residue protein sequence, read N- to C-terminus: Macoilin (664 aa).

4 helical membrane passes run Thr-28–Leu-48, Ala-75–Ile-95, Val-120–Phe-140, and Phe-154–Val-174. The span at Arg-253 to Lys-265 shows a compositional bias: basic and acidic residues. The interval Arg-253 to Asn-274 is disordered. Ser-305 is modified (phosphoserine). Residues Lys-320–Ser-348 are compositionally biased toward polar residues. The tract at residues Lys-320–Leu-367 is disordered. Asn-324 carries N-linked (GlcNAc...) asparagine glycosylation. Position 332 is a phosphoserine (Ser-332). Asn-340 and Asn-452 each carry an N-linked (GlcNAc...) asparagine glycan. Positions Thr-630 to Lys-664 are disordered. A phosphoserine mark is found at Ser-631 and Ser-634. A glycan (N-linked (GlcNAc...) asparagine) is linked at Asn-655.

Belongs to the macoilin family.

Its subcellular location is the rough endoplasmic reticulum membrane. It localises to the nucleus membrane. Plays a role in the regulation of neuronal activity. The polypeptide is Macoilin (MACO1) (Sus scrofa (Pig)).